A 159-amino-acid polypeptide reads, in one-letter code: ATP-dependent Clp protease adapter protein CLPS1, chloroplastic (159 aa).

The N-terminal 44 residues, 1 to 44 (METAICGRLALAPSSLFNSKSGDKHLVSKGPCVNRSILMTLSTS), are a transit peptide targeting the chloroplast.

The protein belongs to the ClpS family. Interacts with CLPC1 (via N-terminus) and CLPC2, but not with CLPt1 or CLPT2. Binds to ClpF; this interaction stimulates their association with ClpC. As to expression, expressed exclusively in photosynthetic green tissues with high levels in young, developing leaf tissues.

The protein localises to the plastid. It is found in the chloroplast stroma. Functionally, small adapter protein that modulate the activity of CLPC. Involved in plastid biogenesis in particular when chloroplast protein synthesis capacity is a limiting factor. Probably involved in substrate selection for plastid Clp protease system. Recruitment to ClpC chaperones is facilitated by CLPF thus forming a binary adapter for selective substrate recognition and delivery to plastid Clp protease system (CLPC). The protein is ATP-dependent Clp protease adapter protein CLPS1, chloroplastic of Arabidopsis thaliana (Mouse-ear cress).